The primary structure comprises 33 residues: Potassium channel toxin alpha-KTx 24.1 (33 aa).

4 cysteine pairs are disulfide-bonded: Cys4–Cys23, Cys9–Cys28, Cys13–Cys30, and Cys18–Cys33.

It belongs to the short scorpion toxin superfamily. Potassium channel inhibitor family. Alpha-KTx 24 subfamily. Post-translationally, contains 4 disulfide bonds. In terms of tissue distribution, expressed by the venom gland.

The protein localises to the secreted. Functionally, reversibly blocks voltage-gated potassium channels Kv1.2/KCNA2, Kv1.3/KCNA3 and, weakly, Shaker B. The protein is Potassium channel toxin alpha-KTx 24.1 of Pandinus imperator (Emperor scorpion).